A 112-amino-acid chain; its full sequence is UPF0060 membrane protein Arth_4238 (112 aa).

4 helical membrane-spanning segments follow: residues 7–27 (ILLFVLAAAAEIGGAWLVWQA), 33–53 (EWWWAGLGVLALGVYGFAATL), 62–82 (ILAAYGGVFVAGSLAWGMVFD), and 88–108 (RWDIIGSVICLLGVAVIMFAP).

It belongs to the UPF0060 family.

The protein resides in the cell membrane. In Arthrobacter sp. (strain FB24), this protein is UPF0060 membrane protein Arth_4238.